The primary structure comprises 108 residues: Hrp pili protein HrpA (108 aa).

Residues 41–56 (NTGSTDSIDATRSSIS) show a composition bias toward polar residues. The disordered stretch occupies residues 41 to 73 (NTGSTDSIDATRSSISKGDAKSAELDGTANEEN).

The protein belongs to the HrpA type 1 family.

The protein resides in the secreted. It localises to the fimbrium. Major structural protein of the hrp pilus, which is a component of the type III secretion system (T3SS, Hrp secretion system) required for effector protein delivery, parasitism, and pathogenicity. The hrp pilus functions as a conduit for protein delivery into the host cell. Also, affects the expression of T3SS-associated genes. Required for full expression of genes that encode regulatory, secretion, and effector proteins of the T3SS. HrpA-mediated gene regulation apparently is through effect on the mRNA level of HrpR and HrpS. The sequence is that of Hrp pili protein HrpA (hrpA) from Pseudomonas syringae pv. syringae.